The following is a 289-amino-acid chain: Nucleotide-binding protein MS1718 (289 aa).

8–15 (GRSGAGKS) is an ATP binding site. Residue 56 to 59 (DIRN) coordinates GTP.

This sequence belongs to the RapZ-like family.

Displays ATPase and GTPase activities. This is Nucleotide-binding protein MS1718 from Mannheimia succiniciproducens (strain KCTC 0769BP / MBEL55E).